The sequence spans 652 residues: Translation factor guf1, mitochondrial (652 aa).

A mitochondrion-targeting transit peptide spans Met1–Pro44. Residues Asn56–Lys237 enclose the tr-type G domain. GTP contacts are provided by residues Ala65–Ser72, Asp130–His134, and Asn184–Asp187.

Belongs to the TRAFAC class translation factor GTPase superfamily. Classic translation factor GTPase family. LepA subfamily.

The protein resides in the mitochondrion inner membrane. The catalysed reaction is GTP + H2O = GDP + phosphate + H(+). Functionally, promotes mitochondrial protein synthesis. May act as a fidelity factor of the translation reaction, by catalyzing a one-codon backward translocation of tRNAs on improperly translocated ribosomes. Binds to mitochondrial ribosomes in a GTP-dependent manner. This is Translation factor guf1, mitochondrial (guf1) from Schizosaccharomyces pombe (strain 972 / ATCC 24843) (Fission yeast).